The sequence spans 398 residues: uncharacterized protein (398 aa).

The next 10 membrane-spanning stretches (helical) occupy residues proline 43–leucine 65, isoleucine 89–serine 108, threonine 156–leucine 173, isoleucine 180–valine 198, leucine 224–alanine 246, isoleucine 259–glycine 281, serine 291–isoleucine 311, leucine 316–valine 338, leucine 351–tryptophan 373, and threonine 380–phenylalanine 397.

Belongs to the major facilitator superfamily.

The protein localises to the cell membrane. This is an uncharacterized protein from Methanocaldococcus jannaschii (strain ATCC 43067 / DSM 2661 / JAL-1 / JCM 10045 / NBRC 100440) (Methanococcus jannaschii).